Here is a 257-residue protein sequence, read N- to C-terminus: 3-deoxy-manno-octulosonate cytidylyltransferase (257 aa).

The protein belongs to the KdsB family.

Its subcellular location is the cytoplasm. It catalyses the reaction 3-deoxy-alpha-D-manno-oct-2-ulosonate + CTP = CMP-3-deoxy-beta-D-manno-octulosonate + diphosphate. The protein operates within nucleotide-sugar biosynthesis; CMP-3-deoxy-D-manno-octulosonate biosynthesis; CMP-3-deoxy-D-manno-octulosonate from 3-deoxy-D-manno-octulosonate and CTP: step 1/1. It participates in bacterial outer membrane biogenesis; lipopolysaccharide biosynthesis. In terms of biological role, activates KDO (a required 8-carbon sugar) for incorporation into bacterial lipopolysaccharide in Gram-negative bacteria. The protein is 3-deoxy-manno-octulosonate cytidylyltransferase of Methylococcus capsulatus (strain ATCC 33009 / NCIMB 11132 / Bath).